Reading from the N-terminus, the 239-residue chain is Ribosomal RNA small subunit methyltransferase G (239 aa).

Residues Gly-95, Leu-100, Glu-118–Thr-120, Ala-146–Glu-147, and Arg-164 contribute to the S-adenosyl-L-methionine site.

This sequence belongs to the methyltransferase superfamily. RNA methyltransferase RsmG family.

It localises to the cytoplasm. It carries out the reaction guanosine(527) in 16S rRNA + S-adenosyl-L-methionine = N(7)-methylguanosine(527) in 16S rRNA + S-adenosyl-L-homocysteine. Functionally, specifically methylates the N7 position of guanine in position 527 of 16S rRNA. The polypeptide is Ribosomal RNA small subunit methyltransferase G (Sorangium cellulosum (strain So ce56) (Polyangium cellulosum (strain So ce56))).